A 763-amino-acid polypeptide reads, in one-letter code: Phosphoglycerol transferase I (763 aa).

4 helical membrane passes run 1-21 (MSEL…AWKA), 26-46 (WWFA…ITLF), 77-97 (ILPG…LGWI), and 108-128 (FGYS…SPAF).

It belongs to the OpgB family.

The protein resides in the cell inner membrane. The enzyme catalyses a phosphatidylglycerol + a membrane-derived-oligosaccharide D-glucose = a 1,2-diacyl-sn-glycerol + a membrane-derived-oligosaccharide 6-(glycerophospho)-D-glucose.. Its pathway is glycan metabolism; osmoregulated periplasmic glucan (OPG) biosynthesis. Its function is as follows. Transfers a phosphoglycerol residue from phosphatidylglycerol to the membrane-bound nascent glucan backbones. The polypeptide is Phosphoglycerol transferase I (Escherichia coli O6:K15:H31 (strain 536 / UPEC)).